Reading from the N-terminus, the 438-residue chain is UDP-N-acetylmuramoylalanine--D-glutamate ligase (438 aa).

112 to 118 (GSNGKST) contacts ATP.

This sequence belongs to the MurCDEF family.

It localises to the cytoplasm. The enzyme catalyses UDP-N-acetyl-alpha-D-muramoyl-L-alanine + D-glutamate + ATP = UDP-N-acetyl-alpha-D-muramoyl-L-alanyl-D-glutamate + ADP + phosphate + H(+). The protein operates within cell wall biogenesis; peptidoglycan biosynthesis. Its function is as follows. Cell wall formation. Catalyzes the addition of glutamate to the nucleotide precursor UDP-N-acetylmuramoyl-L-alanine (UMA). The polypeptide is UDP-N-acetylmuramoylalanine--D-glutamate ligase (Shigella sonnei (strain Ss046)).